The primary structure comprises 186 residues: Transcription factor FapR (186 aa).

Positions 98–168 constitute a MaoC-like domain; the sequence is FTKTQIARGH…YVIEVNSYVR (71 aa).

It belongs to the FapR family.

In terms of biological role, transcriptional factor involved in regulation of membrane lipid biosynthesis by repressing genes involved in fatty acid and phospholipid metabolism. The polypeptide is Transcription factor FapR (Staphylococcus haemolyticus (strain JCSC1435)).